The primary structure comprises 310 residues: ADP-L-glycero-D-manno-heptose-6-epimerase (310 aa).

Residues 10 to 11 (FI), 31 to 32 (DN), Lys-38, Lys-53, 75 to 79 (EGACS), and Asn-92 each bind NADP(+). Tyr-140 (proton acceptor) is an active-site residue. Lys-144 serves as a coordination point for NADP(+). A substrate-binding site is contributed by Asn-169. Val-170 and Lys-178 together coordinate NADP(+). The active-site Proton acceptor is the Lys-178. Substrate is bound by residues Ser-180, His-187, 201–204 (FAGS), Arg-209, and Tyr-272.

This sequence belongs to the NAD(P)-dependent epimerase/dehydratase family. HldD subfamily. Homopentamer. It depends on NADP(+) as a cofactor.

The enzyme catalyses ADP-D-glycero-beta-D-manno-heptose = ADP-L-glycero-beta-D-manno-heptose. It participates in nucleotide-sugar biosynthesis; ADP-L-glycero-beta-D-manno-heptose biosynthesis; ADP-L-glycero-beta-D-manno-heptose from D-glycero-beta-D-manno-heptose 7-phosphate: step 4/4. Functionally, catalyzes the interconversion between ADP-D-glycero-beta-D-manno-heptose and ADP-L-glycero-beta-D-manno-heptose via an epimerization at carbon 6 of the heptose. This chain is ADP-L-glycero-D-manno-heptose-6-epimerase, found in Yersinia pseudotuberculosis serotype O:1b (strain IP 31758).